Reading from the N-terminus, the 446-residue chain is Na(+)-translocating NADH-quinone reductase subunit A (446 aa).

This sequence belongs to the NqrA family. In terms of assembly, composed of six subunits; NqrA, NqrB, NqrC, NqrD, NqrE and NqrF.

It carries out the reaction a ubiquinone + n Na(+)(in) + NADH + H(+) = a ubiquinol + n Na(+)(out) + NAD(+). Its function is as follows. NQR complex catalyzes the reduction of ubiquinone-1 to ubiquinol by two successive reactions, coupled with the transport of Na(+) ions from the cytoplasm to the periplasm. NqrA to NqrE are probably involved in the second step, the conversion of ubisemiquinone to ubiquinol. The sequence is that of Na(+)-translocating NADH-quinone reductase subunit A from Psychromonas ingrahamii (strain DSM 17664 / CCUG 51855 / 37).